Here is a 328-residue protein sequence, read N- to C-terminus: Sulfate adenylyltransferase subunit 2 (328 aa).

Residues 305-328 (ERQGRVIDRDSTGSMERKKAEGYF) are disordered.

It belongs to the PAPS reductase family. CysD subfamily. As to quaternary structure, heterodimer composed of CysD, the smaller subunit, and CysN.

It carries out the reaction sulfate + ATP + H(+) = adenosine 5'-phosphosulfate + diphosphate. Its pathway is sulfur metabolism; hydrogen sulfide biosynthesis; sulfite from sulfate: step 1/3. With CysN forms the ATP sulfurylase (ATPS) that catalyzes the adenylation of sulfate producing adenosine 5'-phosphosulfate (APS) and diphosphate, the first enzymatic step in sulfur assimilation pathway. APS synthesis involves the formation of a high-energy phosphoric-sulfuric acid anhydride bond driven by GTP hydrolysis by CysN coupled to ATP hydrolysis by CysD. This chain is Sulfate adenylyltransferase subunit 2, found in Rhodopseudomonas palustris (strain BisB18).